A 432-amino-acid chain; its full sequence is MAQFYSAKRRVTTREIITVTTDGLDAFGQGVARHHGKALFIAGLLPGERAEVVLSEDKKQFARGDVKKRLSESPERETPRCPHFGVCGGCQQQHASVALQQRSKAQALCRMMKREVDEVISGPAWGYRRRARLSLNFTPRKPGLQMGFRKAGSNDLVDVHRCPVLVPRLEALLPKLRDCLSSLDGVRHLGHVELVDVTSGPLMVLRHLKPLSAADREKLECFSHSEGVALYLAPQSDTLEHLNGEMPWYESDGLRLTFSPRDFIQVNDAVNQQMVARALEWLEIQPGERVLDLFCGMGNFTLPLARRAESVVGVEGVAALVEKGDYNAGLNALKNVTFFQHNLEEDVTRQPWAQQGFDKVLLDPARAGAAGVMQHIVKLKPRRVVYVSCNPATLMRDSETLLAAGYRTVRLAMLDMFPHTGHLESMALFERD.

In terms of domain architecture, TRAM spans 10-68 (RVTTREIITVTTDGLDAFGQGVARHHGKALFIAGLLPGERAEVVLSEDKKQFARGDVKK). The [4Fe-4S] cluster site is built by cysteine 81, cysteine 87, cysteine 90, and cysteine 162. The S-adenosyl-L-methionine site is built by glutamine 265, phenylalanine 294, asparagine 299, glutamate 315, asparagine 342, and aspartate 363. The active-site Nucleophile is the cysteine 389.

The protein belongs to the class I-like SAM-binding methyltransferase superfamily. RNA M5U methyltransferase family. RlmD subfamily.

It carries out the reaction uridine(1939) in 23S rRNA + S-adenosyl-L-methionine = 5-methyluridine(1939) in 23S rRNA + S-adenosyl-L-homocysteine + H(+). Its function is as follows. Catalyzes the formation of 5-methyl-uridine at position 1939 (m5U1939) in 23S rRNA. The protein is 23S rRNA (uracil(1939)-C(5))-methyltransferase RlmD of Cronobacter sakazakii (strain ATCC BAA-894) (Enterobacter sakazakii).